We begin with the raw amino-acid sequence, 510 residues long: NAD(P) transhydrogenase subunit alpha (510 aa).

Residues M1–R401 lie on the Cytoplasmic side of the membrane. NAD(+) contacts are provided by residues R120 to S122, V175, D195 to R197, E238, and L257. 2 consecutive transmembrane segments (helical) span residues K402–K422 and E423–W443. Residues N444–P452 lie on the Cytoplasmic side of the membrane. The chain crosses the membrane as a helical span at residues L453 to G473. Topologically, residues Q474 to G476 are periplasmic. Residues W477–F497 form a helical membrane-spanning segment. Over T498–N510 the chain is Cytoplasmic.

The protein belongs to the AlaDH/PNT family. In terms of assembly, heterodimer of an alpha (PntA) and a beta (PntB) chain. Alpha subunit serves as the dimerization unit.

It localises to the cell inner membrane. It carries out the reaction NAD(+) + NADPH + H(+)(in) = NADH + NADP(+) + H(+)(out). In terms of biological role, the transhydrogenation between NADH and NADP is coupled to respiration and ATP hydrolysis and functions as a proton pump across the membrane. This is NAD(P) transhydrogenase subunit alpha (pntA) from Escherichia coli (strain K12).